The primary structure comprises 216 residues: Adenylate kinase (216 aa).

Gly10 to Thr15 is a binding site for ATP. Residues Ser30–Val59 form an NMP region. Residues Thr31, Arg36, Lys57–Val59, Gly85–Arg88, and Gln92 contribute to the AMP site. Residues Gly126 to Asp163 are LID. Arg127 contributes to the ATP binding site. Zn(2+) contacts are provided by Cys130, Cys133, Cys150, and Cys153. Residues Arg160 and Arg172 each contribute to the AMP site. Ala200 serves as a coordination point for ATP.

The protein belongs to the adenylate kinase family. As to quaternary structure, monomer.

Its subcellular location is the cytoplasm. The enzyme catalyses AMP + ATP = 2 ADP. Its pathway is purine metabolism; AMP biosynthesis via salvage pathway; AMP from ADP: step 1/1. Functionally, catalyzes the reversible transfer of the terminal phosphate group between ATP and AMP. Plays an important role in cellular energy homeostasis and in adenine nucleotide metabolism. The sequence is that of Adenylate kinase from Rhizobium rhizogenes (strain K84 / ATCC BAA-868) (Agrobacterium radiobacter).